We begin with the raw amino-acid sequence, 203 residues long: FMN-dependent NADH:quinone oxidoreductase 5 (203 aa).

Residues serine 9, 15–17, 95–98, and 139–142 each bind FMN; these read SAS, MYNF, and TSGG.

This sequence belongs to the azoreductase type 1 family. As to quaternary structure, homodimer. Requires FMN as cofactor.

It carries out the reaction 2 a quinone + NADH + H(+) = 2 a 1,4-benzosemiquinone + NAD(+). The catalysed reaction is N,N-dimethyl-1,4-phenylenediamine + anthranilate + 2 NAD(+) = 2-(4-dimethylaminophenyl)diazenylbenzoate + 2 NADH + 2 H(+). Quinone reductase that provides resistance to thiol-specific stress caused by electrophilic quinones. Its function is as follows. Also exhibits azoreductase activity. Catalyzes the reductive cleavage of the azo bond in aromatic azo compounds to the corresponding amines. The protein is FMN-dependent NADH:quinone oxidoreductase 5 of Pseudomonas fluorescens (strain ATCC BAA-477 / NRRL B-23932 / Pf-5).